The primary structure comprises 308 residues: Ornithine carbamoyltransferase (308 aa).

Residues 57–60, Gln-84, Arg-108, and 135–138 contribute to the carbamoyl phosphate site; these read STRT and HPCQ. Residues Asn-166, Asp-224, and 228–229 contribute to the L-ornithine site; that span reads SM. Residues 264–265 and Arg-292 each bind carbamoyl phosphate; that span reads CL.

This sequence belongs to the aspartate/ornithine carbamoyltransferase superfamily. OTCase family.

The protein resides in the cytoplasm. It carries out the reaction carbamoyl phosphate + L-ornithine = L-citrulline + phosphate + H(+). Its pathway is amino-acid biosynthesis; L-arginine biosynthesis; L-arginine from L-ornithine and carbamoyl phosphate: step 1/3. Its function is as follows. Reversibly catalyzes the transfer of the carbamoyl group from carbamoyl phosphate (CP) to the N(epsilon) atom of ornithine (ORN) to produce L-citrulline. This chain is Ornithine carbamoyltransferase, found in Ralstonia nicotianae (strain ATCC BAA-1114 / GMI1000) (Ralstonia solanacearum).